Reading from the N-terminus, the 320-residue chain is MAISSRNTLLAALAFIAFQAQAVNVTVAYQTSAEPAKVAQADNTFAKESGATVDWRKFDSGASIVRALASGDVQIGNLGSSPLAVAASQQVPIEVFLLASKLGNSEALVVKKTISKPEDLIGKRIAVPFISTTHYSLLAALKHWGIKPGQVEIVNLQPPAIIAAWQRGDIDGAYVWAPAVNALEKDGKVLTDSEQVGQWGAPTLDVWVVRKDFAEKHPEVVKAFAKSAIDAQQPYIANPDVWLKQPENISKLARLSGVPEGDVPGLVKGNTYLTPQQQTAELTGPVNKAIIDTAQFLKEQGKVPAVANDYSQYVTSRFVQ.

Positions 1–22 (MAISSRNTLLAALAFIAFQAQA) are cleaved as a signal peptide.

The protein belongs to the bacterial solute-binding protein SsuA/TauA family.

The protein resides in the periplasm. In terms of biological role, part of a binding-protein-dependent transport system for taurine. This chain is Taurine-binding periplasmic protein (tauA), found in Escherichia coli (strain K12).